The sequence spans 962 residues: AP2-associated protein kinase 1 (962 aa).

Methionine 1 is modified (N-acetylmethionine). The span at 1-11 (MKKFFDSRREQ) shows a compositional bias: basic and acidic residues. Residues 1–27 (MKKFFDSRREQGSSGLGSGSSGGGGSS) form a disordered region. At serine 14 the chain carries Phosphoserine. Residues 14-27 (SGLGSGSSGGGGSS) are compositionally biased toward gly residues. The Protein kinase domain occupies 46-314 (VTVDEVLAEG…QVSYFSFKLL (269 aa)). Residues 52–60 (LAEGGFALV) and lysine 74 contribute to the ATP site. Aspartate 176 acts as the Proton acceptor in catalysis. Tyrosine 234 carries the post-translational modification Phosphotyrosine. Serine 235 is modified (phosphoserine). 2 disordered regions span residues 325-515 (NSPI…QFQA) and 576-633 (PQAQ…RAGH). Phosphothreonine is present on residues threonine 353 and threonine 388. Omega-N-methylarginine is present on arginine 390. The segment covering 397–418 (PLPQATGPSNQPSLLASVSQPK) has biased composition (polar residues). Low complexity predominate over residues 419–434 (AQATPSQPLQSSQPKQ). Over residues 435-444 (PQAPPTPQQT) the composition is skewed to pro residues. Position 440 is a phosphothreonine (threonine 440). Composition is skewed to low complexity over residues 445-485 (PAPQ…QPQQ), 498-514 (QQQQ…QQFQ), and 576-606 (PQAQ…KVQT). Threonine 607 carries the post-translational modification Phosphothreonine. Residues 614–628 (GQKVGSLTPPSSPKT) are compositionally biased toward polar residues. Serine 619 is modified (phosphoserine). Threonine 621 carries the phosphothreonine modification. Residues serine 624, serine 625, serine 638, and serine 651 each carry the phosphoserine modification. A Phosphothreonine modification is found at threonine 654. The segment covering 664–677 (ASLSKSKSATTTPS) has biased composition (low complexity). Residues 664-702 (ASLSKSKSATTTPSGSPRTSQQNVSNASEGSTWNPFDDD) are disordered. The segment covering 678–697 (GSPRTSQQNVSNASEGSTWN) has biased composition (polar residues). Phosphoserine is present on residues serine 732, serine 847, serine 938, and serine 939. Residues 824 to 961 (EKADAAVESL…SLLLVDQLID (138 aa)) are clathrin-binding domain (CBD). 2 disordered regions span residues 839–860 (PPVA…TDSL) and 925–946 (LITK…ESSL). Residues 846-860 (PSHTESVTSNRTDSL) show a composition bias toward polar residues. Residues 932-945 (GGHSRNSSGSSESS) are compositionally biased toward low complexity.

This sequence belongs to the protein kinase superfamily. Ser/Thr protein kinase family. Interacts (via CBD domain) with clathrin. Interacts with AP-2 complex. Interacts with NUMB. Interacts with alpha-adaptin. Interacts with EPS15. Interacts with membrane-bound activated NOTCH1 but not with the inactive full-length form of NOTCH1. Preferentially interacts with monoubiquitinated activated NOTCH1 compared to the non-ubiquitinated form. In terms of processing, autophosphorylated.

The protein localises to the cell membrane. Its subcellular location is the membrane. It localises to the clathrin-coated pit. The protein resides in the presynapse. The catalysed reaction is L-seryl-[protein] + ATP = O-phospho-L-seryl-[protein] + ADP + H(+). It carries out the reaction L-threonyl-[protein] + ATP = O-phospho-L-threonyl-[protein] + ADP + H(+). Its activity is regulated as follows. Stimulated by clathrin. Functionally, regulates clathrin-mediated endocytosis by phosphorylating the AP2M1/mu2 subunit of the adaptor protein complex 2 (AP-2) which ensures high affinity binding of AP-2 to cargo membrane proteins during the initial stages of endocytosis. Preferentially, may phosphorylate substrates on threonine residues. Regulates phosphorylation of other AP-2 subunits as well as AP-2 localization and AP-2-mediated internalization of ligand complexes. Phosphorylates NUMB and regulates its cellular localization, promoting NUMB localization to endosomes. Binds to and stabilizes the activated form of NOTCH1, increases its localization in endosomes and regulates its transcriptional activity. This is AP2-associated protein kinase 1 (Aak1) from Rattus norvegicus (Rat).